The chain runs to 376 residues: NIF3-like protein 1 (376 aa).

K108 carries the post-translational modification N6-acetyllysine. The segment at 243–376 is mediates interaction with COPS2; that stretch reads LLLHTGMGRL…ETDRDPLRVV (134 aa). Position 254 is a phosphothreonine (T254). Residue S258 is modified to Phosphoserine.

The protein belongs to the GTP cyclohydrolase I type 2/NIF3 family. In terms of assembly, homodimer. Interacts with COPS2. Interacts with THOC7. As to expression, ubiquitous. Detected in all tissues tested with higher expression in cerebellum, heart and kidney and to a lower level in cerebrum, lung, liver, spleen and muscle.

It localises to the cytoplasm. Its subcellular location is the nucleus. May function as a transcriptional corepressor through its interaction with COPS2, negatively regulating the expression of genes involved in neuronal differentiation. The polypeptide is NIF3-like protein 1 (Mus musculus (Mouse)).